The sequence spans 2202 residues: Activating signal cointegrator 1 complex subunit 3 (2202 aa).

Residues 1-400 (MALPRLTGAL…RQRDADVEKI (400 aa)) form a required for interaction with ASCC2 region. S12 carries the post-translational modification Phosphoserine. Coiled coils occupy residues 18–79 (KQDN…AAKQ) and 328–356 (IQSE…KAGE). In terms of domain architecture, Helicase ATP-binding 1 spans 486 to 669 (ETAYNTNENM…FLHVNPYIGL (184 aa)). 499-506 (APTGAGKT) is a binding site for ATP. K572 carries the post-translational modification N6-acetyllysine. A DEVH box motif is present at residues 611-614 (DEVH). In terms of domain architecture, Helicase C-terminal 1 spans 728 to 914 (TVRTAMSLIE…GTVTNVEEAV (187 aa)). The region spanning 978–1287 (STDLGRTASH…GAEAVCIINF (310 aa)) is the SEC63 1 domain. One can recognise a Helicase ATP-binding 2 domain in the interval 1336–1511 (HTLYHTDCNV…WLNIKQMGLF (176 aa)). Residue 1349 to 1356 (APTGSGKT) coordinates ATP. A DEIH box motif is present at residues 1453–1456 (DEIH). The Helicase C-terminal 2 domain maps to 1544 to 1739 (PAFQAIRSHS…VLSDHLNAEI (196 aa)). Positions 1812 to 2176 (PLTYGRIASY…LGLDQQYDIY (365 aa)) constitute an SEC63 2 domain. A Phosphoserine modification is found at S2195.

Belongs to the helicase family. As to quaternary structure, identified in the ASCC complex that contains ASCC1, ASCC2 and ASCC3. Functions as scaffolding subunit that interacts directly with both ASCC1 and ASCC2. Interacts directly with ALKBH3, and thereby recruits ALKBH3 to the ASCC complex. Part of the ASC-1/TRIP4 complex, that contains TRIP4, ASCC1, ASCC2 and ASCC3. Part of the RQT (ribosome quality control trigger) complex, that contains ASCC2, ASCC3 and TRIP4. Associates with ribosomes; recruited to collided ribosomes. Interacts with ZCCHC4. Interacts with ZNF598. Interacts with RPS3. Ubiquitous.

It is found in the nucleus. The protein localises to the nucleus speckle. It localises to the cytoplasm. Its subcellular location is the cytosol. The enzyme catalyses Couples ATP hydrolysis with the unwinding of duplex DNA by translocating in the 3'-5' direction.. The catalysed reaction is ATP + H2O = ADP + phosphate + H(+). Its function is as follows. ATPase involved both in DNA repair and rescue of stalled ribosomes. 3'-5' DNA helicase involved in repair of alkylated DNA: promotes DNA unwinding to generate single-stranded substrate needed for ALKBH3, enabling ALKBH3 to process alkylated N3-methylcytosine (3mC) within double-stranded regions. Also involved in activation of the ribosome quality control (RQC) pathway, a pathway that degrades nascent peptide chains during problematic translation. Drives the splitting of stalled ribosomes that are ubiquitinated in a ZNF598-dependent manner, as part of the ribosome quality control trigger (RQT) complex. Part of the ASC-1 complex that enhances NF-kappa-B, SRF and AP1 transactivation. This is Activating signal cointegrator 1 complex subunit 3 (ASCC3) from Homo sapiens (Human).